Consider the following 156-residue polypeptide: Endoribonuclease YbeY (156 aa).

Positions 122, 126, and 132 each coordinate Zn(2+).

The protein belongs to the endoribonuclease YbeY family. Requires Zn(2+) as cofactor.

It is found in the cytoplasm. Functionally, single strand-specific metallo-endoribonuclease involved in late-stage 70S ribosome quality control and in maturation of the 3' terminus of the 16S rRNA. This is Endoribonuclease YbeY from Pediococcus pentosaceus (strain ATCC 25745 / CCUG 21536 / LMG 10740 / 183-1w).